A 105-amino-acid chain; its full sequence is Large ribosomal subunit protein bL21 (105 aa).

The protein belongs to the bacterial ribosomal protein bL21 family. As to quaternary structure, part of the 50S ribosomal subunit. Contacts protein L20.

Its function is as follows. This protein binds to 23S rRNA in the presence of protein L20. In Porphyromonas gingivalis (strain ATCC BAA-308 / W83), this protein is Large ribosomal subunit protein bL21.